Reading from the N-terminus, the 381-residue chain is Probable tRNA sulfurtransferase (381 aa).

Residues 68-176 form the THUMP domain; the sequence is DLALKLLKKV…NDGAYIFTEK (109 aa). ATP is bound by residues 194–195, lysine 276, glycine 298, and glutamine 307; that span reads LI.

The protein belongs to the ThiI family.

It is found in the cytoplasm. It carries out the reaction [ThiI sulfur-carrier protein]-S-sulfanyl-L-cysteine + a uridine in tRNA + 2 reduced [2Fe-2S]-[ferredoxin] + ATP + H(+) = [ThiI sulfur-carrier protein]-L-cysteine + a 4-thiouridine in tRNA + 2 oxidized [2Fe-2S]-[ferredoxin] + AMP + diphosphate. It catalyses the reaction [ThiS sulfur-carrier protein]-C-terminal Gly-Gly-AMP + S-sulfanyl-L-cysteinyl-[cysteine desulfurase] + AH2 = [ThiS sulfur-carrier protein]-C-terminal-Gly-aminoethanethioate + L-cysteinyl-[cysteine desulfurase] + A + AMP + 2 H(+). It functions in the pathway cofactor biosynthesis; thiamine diphosphate biosynthesis. Its function is as follows. Catalyzes the ATP-dependent transfer of a sulfur to tRNA to produce 4-thiouridine in position 8 of tRNAs, which functions as a near-UV photosensor. Also catalyzes the transfer of sulfur to the sulfur carrier protein ThiS, forming ThiS-thiocarboxylate. This is a step in the synthesis of thiazole, in the thiamine biosynthesis pathway. The sulfur is donated as persulfide by IscS. The chain is Probable tRNA sulfurtransferase from Methanocaldococcus jannaschii (strain ATCC 43067 / DSM 2661 / JAL-1 / JCM 10045 / NBRC 100440) (Methanococcus jannaschii).